A 238-amino-acid chain; its full sequence is Ribonuclease PH (238 aa).

Phosphate-binding positions include R86 and 124 to 126 (GTR).

This sequence belongs to the RNase PH family. As to quaternary structure, homohexameric ring arranged as a trimer of dimers.

The catalysed reaction is tRNA(n+1) + phosphate = tRNA(n) + a ribonucleoside 5'-diphosphate. Its function is as follows. Phosphorolytic 3'-5' exoribonuclease that plays an important role in tRNA 3'-end maturation. Removes nucleotide residues following the 3'-CCA terminus of tRNAs; can also add nucleotides to the ends of RNA molecules by using nucleoside diphosphates as substrates, but this may not be physiologically important. Probably plays a role in initiation of 16S rRNA degradation (leading to ribosome degradation) during starvation. The protein is Ribonuclease PH of Aliivibrio fischeri (strain ATCC 700601 / ES114) (Vibrio fischeri).